We begin with the raw amino-acid sequence, 367 residues long: Quinolinate synthase (367 aa).

Residues His45 and Ser62 each contribute to the iminosuccinate site. [4Fe-4S] cluster is bound at residue Cys109. Iminosuccinate-binding positions include 140–142 (YVN) and Ser161. Cys229 provides a ligand contact to [4Fe-4S] cluster. Iminosuccinate-binding positions include 255–257 (HPE) and Thr272. Cys319 is a [4Fe-4S] cluster binding site.

Belongs to the quinolinate synthase family. Type 3 subfamily. [4Fe-4S] cluster serves as cofactor.

The protein localises to the cytoplasm. The catalysed reaction is iminosuccinate + dihydroxyacetone phosphate = quinolinate + phosphate + 2 H2O + H(+). The protein operates within cofactor biosynthesis; NAD(+) biosynthesis; quinolinate from iminoaspartate: step 1/1. Its function is as follows. Catalyzes the condensation of iminoaspartate with dihydroxyacetone phosphate to form quinolinate. In Geobacillus sp. (strain WCH70), this protein is Quinolinate synthase.